The sequence spans 828 residues: Molybdenum cofactor sulfurase (828 aa).

Lys239 is subject to N6-(pyridoxal phosphate)lysine. The active site involves Cys402. Positions 638 to 682 are disordered; sequence TRYTRRSLHSRSSTAALRRQRPVEESSMPGSFPSDTPLSRTPEPP. The MOSC domain maps to 652-825; that stretch reads AALRRQRPVE…VMVGDVVRPW (174 aa).

The protein belongs to the class-V pyridoxal-phosphate-dependent aminotransferase family. MOCOS subfamily. It depends on pyridoxal 5'-phosphate as a cofactor.

It catalyses the reaction Mo-molybdopterin + L-cysteine + AH2 = thio-Mo-molybdopterin + L-alanine + A + H2O. Functionally, sulfurates the molybdenum cofactor. Sulfation of molybdenum is essential for xanthine dehydrogenase (XDH) and aldehyde oxidase (ADO) enzymes in which molybdenum cofactor is liganded by 1 oxygen and 1 sulfur atom in active form. This chain is Molybdenum cofactor sulfurase, found in Aspergillus terreus (strain NIH 2624 / FGSC A1156).